The sequence spans 70 residues: Protein SlyX homolog (70 aa).

The protein belongs to the SlyX family.

In Shewanella sp. (strain MR-4), this protein is Protein SlyX homolog.